Here is a 1012-residue protein sequence, read N- to C-terminus: MMAQSNMFTVADVLSQDELRKKLYQTFKDRGILDTLKTQLRNQLIHELMHPVLSGELQPRSISVEGSSLLIGASNSLVADHLQRCGYEYSLSVFFPESGLAKEKVFTMQDLLQLIKINPTSSLYKSLVSGSDKENQKGFLMHFLKELAEYHQAKESCNMETQTSSTFNRDSLAEKLQLIDDQFADAYPQRIKFESLEIKLNEYKREIEEQLRAEMCQKLKFFKDTEIAKIKMEAKKKYEKELTMFQNDFEKACQAKSEALVLREKSTLERIHKHQEIETKEIYAQRQLLLKDMDLLRGREAELKQRVEAFELNQKLQEEKHKSITEALRRQEQNIKSFEETYDRKLKNELLKYQLELKDDYIIRTNRLIEDERKNKEKAVHLQEELIAINSKKEELNQSVNRVKELELELESVKAQSLAITKQNHMLNEKVKEMSDYSLLKEEKLELLAQNKLLKQQLEESRNENLRLLNRLAQPAPELAVFQKELRKAEKAIVVEHEEFESCRQALHKQLQDEIEHSAQLKAQILGYKASVKSLTTQVADLKLQLKQTQTALENEVYCNPKQSVIDRSVNGLINGNVVPCNGEISGDFLNNPFKQENVLARMVASRITNYPTAWVEGSSPDSDLEFVANTKARVKELQQEAERLEKAFRSYHRRVIKNSAKSPLAAKSPPSLHLLEAFKNITSSSPERHIFGEDRVVSEQPQVGTLEERNDVVEALTGSAASRLRGGTSSRRLSSTPLPKAKRSLESEMYLEGLGRSHIASPSPCPDRMPLPSPTESRHSLSIPPVSSPPEQKVGLYRRQTELQDKSEFSDVDKLAFKDNEEFESSFESAGNMPRQLEMGGLSPAGDMSHVDAAAAAVPLSYQHPSVDQKQIEEQKEEEKIREQQVKERRQREERRQSNLQEVLERERRELEKLYQERKMIEESLKIKIKKELEMENELEMSNQEIKDKSAHSENPLEKYMKIIQQEQDQESADKSSKKMVQEGSLVDTLQSSDKVESLTGFSHEELDDSW.

The LisH domain occupies leucine 70–lysine 102. Coiled-coil stretches lie at residues glutamine 189–valine 557 and aspartate 622–lysine 662. The tract at residues threonine 609–leucine 665 is mediates homooligomerization. Residues tryptophan 615–tryptophan 1012 form a mediates the interaction with SDCCAG8 region. Phosphoserine is present on residues serine 663, serine 669, serine 686, and serine 720. Positions glycine 719–arginine 744 are disordered. Residues serine 720–threonine 737 show a composition bias toward low complexity. At serine 735 the chain carries Phosphoserine; by PKA. Serine 745, serine 774, serine 789, and serine 811 each carry phosphoserine. Positions arginine 757–lysine 794 are disordered. Residues serine 764 to serine 774 are compositionally biased toward pro residues. Disordered regions lie at residues phenylalanine 824–valine 904 and lysine 963–tryptophan 1012. A coiled-coil region spans residues serine 867 to asparagine 956. Basic and acidic residues-rich tracts occupy residues lysine 871 to valine 904 and serine 973 to valine 982.

It belongs to the OFD1 family. In terms of assembly, homooligomer. Interacts with LCA5. Interacts with RUVBL1; the interaction is direct and may mediate interaction with the NuA4 histone acetyltransferase complex. Interacts with SDCCAG8; the interaction is direct. Interacts with MAP1LC3B. Interacts with C2CD3; OFD1 may act as a negative regulator of C2CD3. Forms a complex with KIAA0753/OFIP and CEP20/FOR20; the interaction with CEP20 is detected only in the presence of KIAA0753. Interacts with PCM1; this interaction may be mediated by KIAA0753/OFIP. Interacts with TBC1D31; regulates OFD1 activity in cilium assembly. Post-translationally, phosphorylated. Phosphorylation at Ser-735, by the cAMP-dependent protein kinase PKA, triggers ubiquitination and proteasomal degradation of OFD1. Also increases its interaction with TBC1D31 and regulates its function in ciliogenesis. In terms of processing, ubiquitinated by PJA2, upon phosphorylation at Ser-735 by PKA, leads to the proteasomal degradation of OFD1. As to expression, widely expressed. Expressed in 9 and 14 weeks old embryos in metanephric mesenchyme, oral mucosa, lung, heart, nasal and cranial cartilage, and brain. Expressed in metanephros, brain, tongue, and limb.

It localises to the cytoplasm. The protein resides in the cytoskeleton. Its subcellular location is the microtubule organizing center. It is found in the centrosome. The protein localises to the centriole. It localises to the cilium basal body. The protein resides in the nucleus. Its subcellular location is the centriolar satellite. In terms of biological role, component of the centrioles controlling mother and daughter centrioles length. Recruits to the centriole IFT88 and centriole distal appendage-specific proteins including CEP164. Involved in the biogenesis of the cilium, a centriole-associated function. The cilium is a cell surface projection found in many vertebrate cells required to transduce signals important for development and tissue homeostasis. Plays an important role in development by regulating Wnt signaling and the specification of the left-right axis. Only OFD1 localized at the centriolar satellites is removed by autophagy, which is an important step in the ciliogenesis regulation. This chain is Centriole and centriolar satellite protein OFD1 (OFD1), found in Homo sapiens (Human).